A 165-amino-acid polypeptide reads, in one-letter code: Nucleotide-binding protein Suden_0039 (165 aa).

The protein belongs to the YajQ family.

Functionally, nucleotide-binding protein. The sequence is that of Nucleotide-binding protein Suden_0039 from Sulfurimonas denitrificans (strain ATCC 33889 / DSM 1251) (Thiomicrospira denitrificans (strain ATCC 33889 / DSM 1251)).